The sequence spans 2053 residues: Nonribosomal peptide synthetase pboA (2053 aa).

An adenylation 1 region spans residues 16–402 (ACRDNADRPA…GRRDRVAKVR (387 aa)). Residues 503-579 (RSYASVDEVI…HLITVCRERR (77 aa)) form the Carrier 1 domain. Position 540 is an O-(pantetheine 4'-phosphoryl)serine (Ser540). The condensation 1 stretch occupies residues 611-896 (NDPSLYCVKH…LLQSVHRTVQ (286 aa)). The interval 1034–1418 (SAAARNPTNI…GRRDRQVKLR (385 aa)) is adenylation 2. The Carrier 2 domain occupies 1515-1593 (VPDTSVKKII…DIVALVEGKI (79 aa)). Residue Ser1553 is modified to O-(pantetheine 4'-phosphoryl)serine. The condensation 2 stretch occupies residues 1630 to 1981 (NSQCQSGFNV…LQLRLEYDSD (352 aa)).

Belongs to the NRP synthetase family. Requires pantetheine 4'-phosphate as cofactor.

It participates in secondary metabolite biosynthesis. Its function is as follows. Nonribosomal peptide synthetase; part of the gene cluster that mediates the biosynthesis of protubonine B, a hydroxylated and diacetylated cyclo-L-Trp-L-Leu derivative. The first step of the protubonine B synthesis is performed by the nonribosomal peptide synthetase pboA that catalyzes the formation of cyclo-L-Trp-L-Leu by condensing L-Leu with L-Trp. The flavin-dependent monooxygenase pboD is responsible for hydroxylation at C-3 of the indole ring and subsequent formation of the pyrrolidine ring, leadind to protubonine D. Protubonine D is further diacetylated by two acetyltransferases, pboB and pboC, to form the final product protubonine B via protubonine C. The protein is Nonribosomal peptide synthetase pboA of Aspergillus ustus.